Here is a 518-residue protein sequence, read N- to C-terminus: Cytochrome P450 monooxygenase pyr3 (518 aa).

The helical transmembrane segment at 26-46 (GVAIVLFLAPLALHLVSSYLF) threads the bilayer. Cysteine 458 contacts heme.

It belongs to the cytochrome P450 family. Heme is required as a cofactor.

Its subcellular location is the membrane. Its pathway is secondary metabolite biosynthesis; terpenoid biosynthesis. Its function is as follows. Cytochrome P450 monooxygenase; part of the gene cluster that mediates the biosynthesis of pyripyropene A, a specific human acyl-coenzyme A:cholesterol acyltransferase 2 inhibitor. The first step of the pathway is the synthesis of nicotinyl-CoA from nicotinic acid by the nicotinic acid-CoA ligase pyr1. Nicotinyl-CoA is then a substrate of polyketide synthase pyr2 to produce 4-hydroxy-6-(3-pyridinyl)-2H-pyran-2-one (HPPO) which is further prenylated by the polyprenyl transferase pyr6 to yield farnesyl-HPPO. The next steps consist of an epoxidation of farnesyl-HPPO to epoxyfarnesyl-HPPO by FAD-dependent monooxygenase pyr5 and a cyclization of the terpenoid portion by the terpene cyclase pyr4 to yield deacetyl-pyripyropene E. The 2 cytochrome P450 monooxygenases pyr3 and pyr9, and the 2 acetyltransferases pyr7 and pyr8 are involved in the conversion of deacetyl-pyripyropene E into pyripyropene A through several cycles of oxidation and acetylation steps. Pyr7 acetylates deacetyl-pyripyropene E to pyripyropene E which is oxidized to 11-deacetyl-pyripyropene O by pyr3, which is in turn acetylated into pyripyropene O by pyr8. Pyripyropene O is then oxidized to deacetyl-pyripyropene A by pyr9. Deacetyl-pyripyropene A is finally acetylated to pyripyropene A by pyr8. The protein is Cytochrome P450 monooxygenase pyr3 of Aspergillus fumigatus (strain ATCC MYA-4609 / CBS 101355 / FGSC A1100 / Af293) (Neosartorya fumigata).